The following is a 194-amino-acid chain: uncharacterized protein (194 aa).

The segment at 62–93 is disordered; that stretch reads GGAGRRTSKAQRVHPQPSHQRQPPPPQHPGPY.

As to expression, expressed most abundantly in the brain at protein level. Present in cortex, cerebellum and midbrain. Found in neurons. Elevated expressions detected in Alzheimer brain samples. Also expressed in testis.

It is found in the cytoplasm. This is an uncharacterized protein from Homo sapiens (Human).